A 516-amino-acid chain; its full sequence is UDP-N-acetylmuramyl-tripeptide synthetase (516 aa).

Residue Ser-38 participates in UDP-N-acetyl-alpha-D-muramoyl-L-alanyl-D-glutamate binding. Residue 116 to 122 coordinates ATP; the sequence is GTKGKTT. Residues 162–163, Ser-189, and Arg-197 each bind UDP-N-acetyl-alpha-D-muramoyl-L-alanyl-D-glutamate; that span reads TT. Lys-231 carries the N6-carboxylysine modification.

The protein belongs to the MurCDEF family. MurE subfamily. Post-translationally, carboxylation is probably crucial for Mg(2+) binding and, consequently, for the gamma-phosphate positioning of ATP.

The protein localises to the cytoplasm. Its pathway is cell wall biogenesis; peptidoglycan biosynthesis. Catalyzes the addition of an amino acid to the nucleotide precursor UDP-N-acetylmuramoyl-L-alanyl-D-glutamate (UMAG) in the biosynthesis of bacterial cell-wall peptidoglycan. This Lactobacillus delbrueckii subsp. bulgaricus (strain ATCC 11842 / DSM 20081 / BCRC 10696 / JCM 1002 / NBRC 13953 / NCIMB 11778 / NCTC 12712 / WDCM 00102 / Lb 14) protein is UDP-N-acetylmuramyl-tripeptide synthetase.